Here is a 947-residue protein sequence, read N- to C-terminus: Serine-aspartate repeat-containing protein C (947 aa).

Residues 1–50 (MNNKKTATNRKGMIPNRLNKFSIRKYSVGTASILVGTTLIFGLSGHEAKA) form the signal peptide. Residues 51–164 (AEHTNGELNQ…STTPKTTTIK (114 aa)) form a disordered region. The tract at residues 51–495 (AEHTNGELNQ…GSSTANGDQK (445 aa)) is ligand binding A region. Over residues 56-71 (GELNQSKNETTAPSEN) the composition is skewed to polar residues. A compositionally biased stretch (basic and acidic residues) spans 72-83 (KTTKKVDSRQLK). Residues 84–155 (DNTQTATADQ…SNLTQAKDVS (72 aa)) show a composition bias toward polar residues. 2 consecutive CNA-B domains span residues 496–606 (KYNL…YKTP) and 607–717 (KYSL…EEET). Residues 678-927 (TQTGTNTTED…NNSNNGTLFG (250 aa)) form a disordered region. Acidic residues-rich tracts occupy residues 685-695 (TEDDKDADGGE) and 712-886 (YYEE…DSDS). An LPXTG sorting signal motif is present at residues 910–914 (LPETG). A compositionally biased stretch (low complexity) spans 912-927 (ETGSENNNSNNGTLFG). Pentaglycyl murein peptidoglycan amidated threonine is present on Thr913. Residues 914 to 947 (GSENNNSNNGTLFGGLFAALGSLLLFGRRKKQNK) constitute a propeptide, removed by sortase.

Belongs to the serine-aspartate repeat-containing protein (SDr) family. In terms of assembly, homodimerizes; via N2-Domain. Interacts with host NRXN1; this interaction mediates bacterial attachment to host cells.

It is found in the secreted. Its subcellular location is the cell wall. Functionally, cell surface-associated calcium-binding protein which plays an important role in adhesion and pathogenesis. Mediates interactions with components of the extracellular matrix such as host NRXN1 to promote bacterial adhesion. The protein is Serine-aspartate repeat-containing protein C (sdrC) of Staphylococcus aureus (strain USA300).